The sequence spans 105 residues: Iron-sulfur cluster assembly protein CyaY (105 aa).

Belongs to the frataxin family.

Involved in iron-sulfur (Fe-S) cluster assembly. May act as a regulator of Fe-S biogenesis. The sequence is that of Iron-sulfur cluster assembly protein CyaY from Paraburkholderia xenovorans (strain LB400).